The chain runs to 79 residues: DGQSIYESGTSPTCASCHDRGTAGAPKINEPGDWDGIDLDAEALVDSTMDGKGAMPAYDGRADRDEVKEAVEYMLSTIE.

Polar residues predominate over residues 1–14 (DGQSIYESGTSPTC). The tract at residues 1 to 35 (DGQSIYESGTSPTCASCHDRGTAGAPKINEPGDWD) is disordered. Residues cysteine 14, cysteine 17, histidine 18, and methionine 55 each contribute to the heme c site.

Binds 1 heme c group covalently per subunit.

In Halorhodospira halochloris (Ectothiorhodospira halochloris), this protein is Cytochrome c-551.